The primary structure comprises 201 residues: ATP synthase subunit b 2 (201 aa).

The segment covering 1–17 (MAEQKNPLTTPSPNADT) has biased composition (polar residues). The tract at residues 1–39 (MAEQKNPLTTPSPNADTTIVPAGSPHTHTEQPSGGHGGA) is disordered. The helical transmembrane segment at 47–66 (TFLSQLIWLALAFGLLYYLM) threads the bilayer.

The protein belongs to the ATPase B chain family. F-type ATPases have 2 components, F(1) - the catalytic core - and F(0) - the membrane proton channel. F(1) has five subunits: alpha(3), beta(3), gamma(1), delta(1), epsilon(1). F(0) has three main subunits: a(1), b(2) and c(10-14). The alpha and beta chains form an alternating ring which encloses part of the gamma chain. F(1) is attached to F(0) by a central stalk formed by the gamma and epsilon chains, while a peripheral stalk is formed by the delta and b chains.

It is found in the cell inner membrane. Functionally, f(1)F(0) ATP synthase produces ATP from ADP in the presence of a proton or sodium gradient. F-type ATPases consist of two structural domains, F(1) containing the extramembraneous catalytic core and F(0) containing the membrane proton channel, linked together by a central stalk and a peripheral stalk. During catalysis, ATP synthesis in the catalytic domain of F(1) is coupled via a rotary mechanism of the central stalk subunits to proton translocation. Component of the F(0) channel, it forms part of the peripheral stalk, linking F(1) to F(0). The b'-subunit is a diverged and duplicated form of b found in plants and photosynthetic bacteria. The sequence is that of ATP synthase subunit b 2 (atpF2) from Methylorubrum extorquens (strain PA1) (Methylobacterium extorquens).